Consider the following 573-residue polypeptide: PCNA-interacting partner (573 aa).

The disordered stretch occupies residues 492 to 532; it reads TGGQVKNKPCKNVANKRSKRKQVDIQSETTNAQENEPPQKK. Residues 515–527 are compositionally biased toward polar residues; sequence DIQSETTNAQENE.

It belongs to the PARI family.

It localises to the cytoplasm. The protein localises to the nucleus. Required to suppress inappropriate homologous recombination, thereby playing a central role DNA repair and in the maintenance of genomic stability. This Xenopus tropicalis (Western clawed frog) protein is PCNA-interacting partner (parpbp).